An 841-amino-acid polypeptide reads, in one-letter code: Translation initiation factor IF-2 (841 aa).

The disordered stretch occupies residues 94–258 (QRSPEEIEAE…HGFQSPTGPV (165 aa)). Residues 96 to 136 (SPEEIEAERKRELEERRAVENAARQKAEEEAKRRAEEEARR) show a composition bias toward basic and acidic residues. Positions 137–173 (QPAAAQPAGTEAVAAPVAPVEAVREAAPVAAAPAPAA) are enriched in low complexity. Basic and acidic residues-rich tracts occupy residues 174–194 (DARK…DNNR), 200–217 (DGER…EKAP), and 225–234 (TTDEESDGFR). Positions 235–248 (RGGRGKAKLKKRNA) are enriched in basic residues. The region spanning 341–510 (SRAPVVTVMG…LLQAEVLELK (170 aa)) is the tr-type G domain. The interval 350 to 357 (GHVDHGKT) is G1. 350-357 (GHVDHGKT) serves as a coordination point for GTP. The tract at residues 375–379 (GITQH) is G2. Positions 396-399 (DTPG) are G3. Residues 396-400 (DTPGH) and 450-453 (NKID) contribute to the GTP site. The G4 stretch occupies residues 450-453 (NKID). The segment at 486-488 (SAK) is G5.

The protein belongs to the TRAFAC class translation factor GTPase superfamily. Classic translation factor GTPase family. IF-2 subfamily.

It localises to the cytoplasm. One of the essential components for the initiation of protein synthesis. Protects formylmethionyl-tRNA from spontaneous hydrolysis and promotes its binding to the 30S ribosomal subunits. Also involved in the hydrolysis of GTP during the formation of the 70S ribosomal complex. This chain is Translation initiation factor IF-2, found in Pseudomonas fluorescens (strain SBW25).